Consider the following 332-residue polypeptide: Torsin-1A (332 aa).

A signal peptide spans 1-20 (MKLGRAALGLLLLAPSVVQA). Residues 91–251 (KPKKPLTLSL…VSVFNNKNSG (161 aa)) form an interaction with SNAPIN region. 102–109 (GWTGTGKN) is an ATP binding site. N-linked (GlcNAc...) asparagine glycans are attached at residues N143 and N158. The interaction with KLC1 stretch occupies residues 251 to 332 (GFWHSSLIDR…FTKLDYYYDD (82 aa)). The segment at 312–332 (RVFSDKGCKTVFTKLDYYYDD) is interaction with SYNE3.

The protein belongs to the ClpA/ClpB family. Torsin subfamily. As to quaternary structure, homohexamer. Interacts with TOR1B; the interaction may be specific of neural tissues. Interacts (ATP-bound) with TOR1AIP1 and TOR1AIP2; the interactions induce ATPase activity. Interacts with KLHL14; preferentially when ATP-free. Interacts with KLC1 (via TPR repeats); the interaction associates TOR1A with the kinesin oligomeric complex. Interacts with COPS4; the interaction associates TOR1A with the CSN complex. Interacts with SNAPIN; the interaction is direct and associates SNAPIN with the CSN complex. Interacts with STON2. Interacts (ATP-bound) with SYNE3 (via KASH domain); the interaction is required for SYNE3 nuclear envelope localization. Interacts with VIM; the interaction associates TOR1A with the cytoskeleton. Interacts with PLEC. Interacts (ATP-bound) with SLC6A3; regulates SLC6A3 transport to the plasma membrane. Post-translationally, N-glycosylated.

It is found in the endoplasmic reticulum lumen. Its subcellular location is the nucleus membrane. It localises to the cell projection. The protein localises to the growth cone. The protein resides in the cytoplasmic vesicle membrane. It is found in the cytoplasmic vesicle. Its subcellular location is the secretory vesicle. It localises to the synaptic vesicle. The protein localises to the cytoplasm. The protein resides in the cytoskeleton. It carries out the reaction ATP + H2O = ADP + phosphate + H(+). Its function is as follows. Protein with chaperone functions important for the control of protein folding, processing, stability and localization as well as for the reduction of misfolded protein aggregates. Involved in the regulation of synaptic vesicle recycling, controls STON2 protein stability in collaboration with the COP9 signalosome complex (CSN). In the nucleus, may link the cytoskeleton with the nuclear envelope, this mechanism seems to be crucial for the control of nuclear polarity, cell movement and, specifically in neurons, nuclear envelope integrity. Participates in the cellular trafficking and may regulate the subcellular location of multipass membrane proteins such as the dopamine transporter SLC6A3, leading to the modulation of dopamine neurotransmission. In the endoplasmic reticulum, plays a role in the quality control of protein folding by increasing clearance of misfolded proteins such as SGCE variants or holding them in an intermediate state for proper refolding. May have a redundant function with TOR1B in non-neural tissues. This is Torsin-1A (TOR1A) from Macaca fascicularis (Crab-eating macaque).